The following is an 851-amino-acid chain: DNA mismatch repair protein MutS (851 aa).

ATP is bound at residue 602-609 (GPNMSGKS).

The protein belongs to the DNA mismatch repair MutS family.

Functionally, this protein is involved in the repair of mismatches in DNA. It is possible that it carries out the mismatch recognition step. This protein has a weak ATPase activity. In Streptococcus pyogenes serotype M28 (strain MGAS6180), this protein is DNA mismatch repair protein MutS.